The primary structure comprises 708 residues: O-antigen chain terminator bifunctional methyltransferase/kinase WbdD (708 aa).

The tract at residues methionine 1–asparagine 210 is methyltransferase. Residues tyrosine 16 to glutamine 17, arginine 36, glycine 61, aspartate 82 to asparagine 87, glycine 108 to glutamate 111, and leucine 128 each bind S-adenosyl-L-methionine. The interval histidine 211–arginine 459 is kinase. ATP is bound by residues proline 229, histidine 237, arginine 241–tyrosine 243, lysine 252, glutamate 274, glutamate 309–leucine 311, methionine 358, and aspartate 369. The stretch at alanine 485–serine 594 forms a coiled coil. The segment at tyrosine 601–proline 669 is required for membrane-binding. The tract at residues valine 687 to lysine 708 is required for localizing WbdA to the membrane.

The protein belongs to the WbdD family. In terms of assembly, homotrimer in solution. Interacts with WbdA.

The protein localises to the cell inner membrane. It carries out the reaction 3-O-phospho-alpha-D-Man-(1-&gt;2)-alpha-D-Man-(1-&gt;2)-[alpha-D-Man-(1-&gt;3)-alpha-D-Man-(1-&gt;3)-alpha-D-Man-(1-&gt;2)-alpha-D-Man-(1-&gt;2)](n)-alpha-D-Man-(1-&gt;3)-alpha-D-Man-(1-&gt;3)-alpha-D-Man-(1-&gt;3)-alpha-D-GlcNAc-di-trans,octa-cis-undecaprenyl diphosphate + S-adenosyl-L-methionine = 3-O-methylphospho-alpha-D-Man-(1-&gt;2)-alpha-D-Man-(1-&gt;2)-[alpha-D-Man-(1-&gt;3)-alpha-D-Man-(1-&gt;3)-alpha-D-Man-(1-&gt;2)-alpha-D-Man-(1-&gt;2)](n)-alpha-D-Man-(1-&gt;3)-alpha-D-Man-(1-&gt;3)-alpha-D-Man-(1-&gt;3)-alpha-D-GlcNAc-di-trans,octa-cis-undecaprenyl diphosphate + S-adenosyl-L-homocysteine. It catalyses the reaction alpha-D-Man-(1-&gt;2)-alpha-D-Man-(1-&gt;2)-[alpha-D-Man-(1-&gt;3)-alpha-D-Man-(1-&gt;3)-alpha-D-Man-(1-&gt;2)-alpha-D-Man-(1-&gt;2)](n)-alpha-D-Man-(1-&gt;3)-alpha-D-Man-(1-&gt;3)-alpha-D-Man-(1-&gt;3)-alpha-D-GlcNAc-di-trans,octa-cis-undecaprenyl diphosphate + ATP = 3-O-phospho-alpha-D-Man-(1-&gt;2)-alpha-D-Man-(1-&gt;2)-[alpha-D-Man-(1-&gt;3)-alpha-D-Man-(1-&gt;3)-alpha-D-Man-(1-&gt;2)-alpha-D-Man-(1-&gt;2)](n)-alpha-D-Man-(1-&gt;3)-alpha-D-Man-(1-&gt;3)-alpha-D-Man-(1-&gt;3)-alpha-D-GlcNAc-di-trans,octa-cis-undecaprenyl diphosphate + ADP + H(+). The protein operates within bacterial outer membrane biogenesis; LPS O-antigen biosynthesis. In terms of biological role, regulates the length of the LPS O-antigen polysaccharide chain. Stops the polymerization of the chain by phosphorylating and then methylating the phosphate on the terminal sugar. This terminal modification is essential for export of the O-antigen across the inner membrane. WbdD is also required for correct localization of the WbdA mannosyltransferase. In Escherichia coli, this protein is O-antigen chain terminator bifunctional methyltransferase/kinase WbdD.